A 630-amino-acid polypeptide reads, in one-letter code: Plastin-3 (630 aa).

EF-hand domains follow at residues Asp12–Pro47 and Lys52–Ser87. Asp25, Asn27, Asn29, Glu36, Asp65, Asn67, Asp69, Lys71, and Glu76 together coordinate Ca(2+). Actin-binding regions lie at residues Thr109 to Lys382 and Pro383 to Met627. 2 Calponin-homology (CH) domains span residues Glu123–Leu239 and Leu267–Pro378. Phosphoserine is present on residues Ser268, Ser293, Ser326, and Ser339. Position 391 is a phosphothreonine (Thr391). Calponin-homology (CH) domains lie at Thr397–Thr506 and Lys518–Met627.

As to quaternary structure, monomer.

It is found in the cytoplasm. In terms of biological role, actin-bundling protein. The polypeptide is Plastin-3 (Pls3) (Rattus norvegicus (Rat)).